The primary structure comprises 329 residues: UDP-glucose 4-epimerase (329 aa).

NAD(+)-binding positions include 11 to 12 (YV), 31 to 36 (DNFSTG), 51 to 52 (DV), 71 to 75 (FAARS), threonine 115, tyrosine 139, lysine 143, and phenylalanine 167. Residues threonine 115 and tyrosine 139 each contribute to the substrate site. Residue tyrosine 139 is the Proton acceptor of the active site. Substrate is bound by residues asparagine 168, 185–186 (HL), 202–204 (FMF), arginine 217, and 277–280 (RAGD).

It belongs to the NAD(P)-dependent epimerase/dehydratase family. As to quaternary structure, homodimer. Requires NAD(+) as cofactor.

The enzyme catalyses UDP-alpha-D-glucose = UDP-alpha-D-galactose. It participates in carbohydrate metabolism; galactose metabolism. Involved in the metabolism of galactose. Catalyzes the conversion of UDP-galactose (UDP-Gal) to UDP-glucose (UDP-Glc) through a mechanism involving the transient reduction of NAD. This Corynebacterium glutamicum (strain ATCC 13032 / DSM 20300 / JCM 1318 / BCRC 11384 / CCUG 27702 / LMG 3730 / NBRC 12168 / NCIMB 10025 / NRRL B-2784 / 534) protein is UDP-glucose 4-epimerase (galE).